Here is a 552-residue protein sequence, read N- to C-terminus: Putative transport protein YPN_3727 (552 aa).

6 helical membrane-spanning segments follow: residues 1-21 (MSAI…GLWI), 26-46 (IYGV…VGHF), 65-85 (FGLI…FFSS), 96-116 (FAIL…KLFA), 119-139 (LPII…LGAA), and 158-178 (MGYA…MWLI). 2 consecutive RCK C-terminal domains span residues 192–276 (AFDS…VVGE) and 279–361 (DVTL…IVGN). Helical transmembrane passes span 371-391 (MLPV…PLFV), 393-413 (GFPA…ALIL), 439-459 (IVLF…NTLV), 464-484 (LAWI…VGIL), 493-513 (YLTL…LAFA), and 530-550 (VYPL…VLFW).

It belongs to the AAE transporter (TC 2.A.81) family. YidE subfamily.

Its subcellular location is the cell membrane. This chain is Putative transport protein YPN_3727, found in Yersinia pestis bv. Antiqua (strain Nepal516).